Here is a 176-residue protein sequence, read N- to C-terminus: Peptide deformylase (176 aa).

Cys-92 and His-134 together coordinate Fe cation. Glu-135 is an active-site residue. His-138 contacts Fe cation.

It belongs to the polypeptide deformylase family. Requires Fe(2+) as cofactor.

The enzyme catalyses N-terminal N-formyl-L-methionyl-[peptide] + H2O = N-terminal L-methionyl-[peptide] + formate. Its function is as follows. Removes the formyl group from the N-terminal Met of newly synthesized proteins. Requires at least a dipeptide for an efficient rate of reaction. N-terminal L-methionine is a prerequisite for activity but the enzyme has broad specificity at other positions. The polypeptide is Peptide deformylase (Acinetobacter baumannii (strain SDF)).